The primary structure comprises 401 residues: MEKKKVVLAYSGGLDTSVAIKWLQEKNYDIIALCLDLGEGKDLAFVKEKALSVGAIKSYMIDVQEEFANEYALMAMQAHTLYEGKYPLVSALSRPLIAKKLVEIAEQEGATAVAHGCTGKGNDQVRFEVSIQALNPYLEVIAPVREWKWSREEEIAYAKENDVPIPINLDSPFSIDQNLWGRSNECGILEDPWAAPPEDAYEMTLALEDTPNKPEFVEIGFEAGVPTTLNGTAYSLAELIKTLNALAGKHGVGRIDHVENRLVGIKSREVYECPAAMTLITAHKELEDLTHVKEVAHFKPVIEQKITELIYNGLWFSPLKQALHAFLQETQKNVTGTVRVKLFKGHAIVEGRKSEYSLYDEKLATYTAQDEFNHDAAVGFISLFGLPTKVYSQVNQKKVEA.

9-17 (AYSGGLDTS) provides a ligand contact to ATP. Tyr86 contacts L-citrulline. Residue Gly116 coordinates ATP. Thr118, Asn122, and Asp123 together coordinate L-aspartate. Asn122 contacts L-citrulline. L-citrulline contacts are provided by Arg126, Ser174, Ser183, Glu259, and Tyr271.

Belongs to the argininosuccinate synthase family. Type 1 subfamily. Homotetramer.

The protein resides in the cytoplasm. The catalysed reaction is L-citrulline + L-aspartate + ATP = 2-(N(omega)-L-arginino)succinate + AMP + diphosphate + H(+). It participates in amino-acid biosynthesis; L-arginine biosynthesis; L-arginine from L-ornithine and carbamoyl phosphate: step 2/3. The sequence is that of Argininosuccinate synthase from Bacillus cereus (strain B4264).